The primary structure comprises 226 residues: 2-C-methyl-D-erythritol 4-phosphate cytidylyltransferase (226 aa).

The protein belongs to the IspD/TarI cytidylyltransferase family. IspD subfamily.

It catalyses the reaction 2-C-methyl-D-erythritol 4-phosphate + CTP + H(+) = 4-CDP-2-C-methyl-D-erythritol + diphosphate. Its pathway is isoprenoid biosynthesis; isopentenyl diphosphate biosynthesis via DXP pathway; isopentenyl diphosphate from 1-deoxy-D-xylulose 5-phosphate: step 2/6. In terms of biological role, catalyzes the formation of 4-diphosphocytidyl-2-C-methyl-D-erythritol from CTP and 2-C-methyl-D-erythritol 4-phosphate (MEP). The protein is 2-C-methyl-D-erythritol 4-phosphate cytidylyltransferase of Prochlorococcus marinus (strain SARG / CCMP1375 / SS120).